The chain runs to 499 residues: 3-octaprenyl-4-hydroxybenzoate carboxy-lyase (499 aa).

Position 173 (Asn173) interacts with Mn(2+). Prenylated FMN-binding positions include 176–178, 190–192, and 195–196; these read IYR, RWL, and RG. A Mn(2+)-binding site is contributed by Glu239. The Proton donor role is filled by Asp288.

The protein belongs to the UbiD family. As to quaternary structure, homohexamer. Prenylated FMN serves as cofactor. Requires Mn(2+) as cofactor.

Its subcellular location is the cell membrane. The catalysed reaction is a 4-hydroxy-3-(all-trans-polyprenyl)benzoate + H(+) = a 2-(all-trans-polyprenyl)phenol + CO2. It participates in cofactor biosynthesis; ubiquinone biosynthesis. Catalyzes the decarboxylation of 3-octaprenyl-4-hydroxy benzoate to 2-octaprenylphenol, an intermediate step in ubiquinone biosynthesis. The protein is 3-octaprenyl-4-hydroxybenzoate carboxy-lyase of Blochmanniella floridana.